The following is a 224-amino-acid chain: uncharacterized protein (224 aa).

Residues 203–224 (ELKKKKKKKIKKPKEIRNQKNV) are disordered. Residues 204–214 (LKKKKKKKIKK) show a composition bias toward basic residues. Basic and acidic residues predominate over residues 215-224 (PKEIRNQKNV).

This is an uncharacterized protein from Mycoplasma genitalium (strain ATCC 33530 / DSM 19775 / NCTC 10195 / G37) (Mycoplasmoides genitalium).